The following is a 342-amino-acid chain: (Lyso)-N-acylphosphatidylethanolamine lipase (342 aa).

Residues 70 to 201 (PLVMVHGFGG…KAVASVLGRS (132 aa)) enclose the AB hydrolase-1 domain.

It belongs to the peptidase S33 family. ABHD4/ABHD5 subfamily.

The enzyme catalyses N-hexadecanoyl-1,2-di-(9Z-octadecenoyl)-sn-glycero-3-phosphoethanolamine + H2O = N-hexadecanoyl-1-(9Z-octadecenoyl)-sn-glycero-3-phosphoethanolamine + (9Z)-octadecenoate + H(+). The catalysed reaction is an N-acyl-1,2-diacyl-sn-glycero-3-phosphoethanolamine + H2O = N,1-diacyl-sn-glycero-3-phosphoethanolamine + a fatty acid + H(+). It carries out the reaction N-hexadecanoyl-1-(9Z-octadecenoyl)-sn-glycero-3-phosphoethanolamine + H2O = N-hexadecanoyl-sn-glycero-3-phosphoethanolamine + (9Z)-octadecenoate + H(+). It catalyses the reaction N-octadecanoyl-1-(9Z-octadecenoyl)-sn-glycero-3-phosphoethanolamine + H2O = N-octadecanoyl-sn-glycero-3-phospho-ethanolamine + (9Z)-octadecenoate + H(+). The enzyme catalyses N-eicosanoyl-1-(9Z-octadecenoyl)-sn-glycero-3-phosphoethanolamine + H2O = N-eicosanoyl-sn-glycero-3-phosphoethanolamine + (9Z)-octadecenoate + H(+). The catalysed reaction is N,1-di-(9Z-octadecenoyl)-sn-glycero-3-phosphoethanolamine + H2O = N-(9Z-octadecenoyl)-sn-glycero-3-phosphoethanolamine + (9Z)-octadecenoate + H(+). It carries out the reaction N-(5Z,8Z,11Z,14Z-eicosatetraenoyl)-1-(9Z-octadecenoyl)-sn-glycero-3-phosphoethanolamine + H2O = N-(5Z,8Z,11Z,14Z-eicosatetraenoyl)-sn-glycero-3-phosphoethanolamine + (9Z)-octadecenoate + H(+). It catalyses the reaction 1-octadecanoyl-2-(9Z-octadecenoyl)-sn-glycero-3-phospho-(N-hexadecanoyl)-serine + H2O = 1-octadecanoyl-2-hydroxy-sn-glycero-3-phospho-(N-hexadecanoyl)-serine + (9Z)-octadecenoate + H(+). The enzyme catalyses 1-O-(1Z-octadecenoyl)-2-(9Z-octadecenoyl)-sn-glycero-3-phospho-N-hexadecanoyl-ethanolamine + H2O = 1-O-(1Z-octadecenyl)-sn-glycero-3-phospho-N-hexadecanoyl-ethanolamine + (9Z)-octadecenoate + H(+). The catalysed reaction is N,1-diacyl-sn-glycero-3-phosphoethanolamine + H2O = N-acyl-sn-glycero-3-phosphoethanolamine + a fatty acid + H(+). Functionally, lysophospholipase selective for N-acyl phosphatidylethanolamine (NAPE). Contributes to the biosynthesis of N-acyl ethanolamines, including the endocannabinoid anandamide by hydrolyzing the sn-1 and sn-2 acyl chains from N-acyl phosphatidylethanolamine (NAPE) generating glycerophospho-N-acyl ethanolamine (GP-NAE), an intermediate for N-acyl ethanolamine biosynthesis. Hydrolyzes substrates bearing saturated, monounsaturated, polyunsaturated N-acyl chains. Shows no significant activity towards other lysophospholipids, including lysophosphatidylcholine, lysophosphatidylethanolamine and lysophosphatidylserine. In Homo sapiens (Human), this protein is (Lyso)-N-acylphosphatidylethanolamine lipase.